A 212-amino-acid chain; its full sequence is Soluble inorganic pyrophosphatase 1 (212 aa).

Lys-62 and Arg-76 together coordinate substrate. Residue Tyr-84 is the Proton donor of the active site. Substrate is bound at residue Tyr-88. The Mg(2+) site is built by Asp-98, Asp-103, and Asp-135. Position 172 (Tyr-172) interacts with substrate.

This sequence belongs to the PPase family. Monomer. Mg(2+) is required as a cofactor. As to expression, ubiquitous. Lower level of expression in ovary, stigma and pollen.

It localises to the cytoplasm. The enzyme catalyses diphosphate + H2O = 2 phosphate + H(+). Its activity is regulated as follows. Inhibited by Zn(2+), Ca(2+), Ba(2+), Fe(2+), Co(2+), Cu(2+), Eu(2+), Eu(3+) and Mn(2+). Its function is as follows. Catalyzes the irreversible hydrolysis of pyrophosphate (PPi) to phosphate. The MgPPi(2-) complex binds to the enzyme only after a free Mg(2+) ion has bound. No activity with glycerol-3-phosphate, glucose-6-phosphate, p-nitrophenylphosphate, ADP, NADP(+), NAD(+),NADH, NADPH or phosphoribosyl pyrophosphate as substrates. Controls the equilibrium of gluconeogenic reactions in the heterotrophic growth phase of early seedling establishment. Determinates the rate of cytosolic glycolysis, providing carbon for seed storage lipid accumulation. The chain is Soluble inorganic pyrophosphatase 1 from Arabidopsis thaliana (Mouse-ear cress).